The chain runs to 138 residues: Homeobox protein HD-11 (138 aa).

Residues 30-89 (CTGKQMRKTRLQTCVLNRIFEISRFPSSKTIVDLALLINVHPKSIQKWFQNTRQAIRKKG) constitute a DNA-binding region (homeobox).

Its subcellular location is the nucleus. The protein is Homeobox protein HD-11 (HD-11) of Encephalitozoon cuniculi (strain GB-M1) (Microsporidian parasite).